Reading from the N-terminus, the 1394-residue chain is Coiled-coil domain-containing protein 7 (1394 aa).

Positions leucine 308–threonine 340 form a coiled coil. A disordered region spans residues serine 345–glutamate 375. Residues arginine 349–lysine 362 are compositionally biased toward basic residues. Residues glycine 363 to glutamate 375 show a composition bias toward basic and acidic residues. Residues leucine 383–leucine 421 are a coiled coil. Disordered stretches follow at residues glutamate 431–aspartate 617, glutamate 634–glutamine 806, and asparagine 819–lysine 842. Over residues threonine 437 to glutamate 446 the composition is skewed to polar residues. A compositionally biased stretch (basic and acidic residues) spans valine 447–glycine 462. Residues serine 464–lysine 473 are compositionally biased toward polar residues. The segment covering leucine 491 to arginine 500 has biased composition (basic and acidic residues). 3 stretches are compositionally biased toward polar residues: residues proline 503–lysine 513, leucine 521–proline 538, and leucine 546–valine 571. A compositionally biased stretch (basic and acidic residues) spans glutamate 583–glutamate 600. Polar residues predominate over residues serine 663–serine 679. Over residues glutamine 695 to lysine 707 the composition is skewed to basic and acidic residues. Over residues phenylalanine 711–glutamate 721 the composition is skewed to polar residues. The segment covering valine 722 to serine 736 has biased composition (basic and acidic residues). The segment covering lysine 780 to isoleucine 790 has biased composition (polar residues). Composition is skewed to basic and acidic residues over residues threonine 791–glutamine 806 and threonine 830–lysine 842.

Its function is as follows. May play a role in tumorigenesis. The sequence is that of Coiled-coil domain-containing protein 7 (CCDC7) from Macaca fascicularis (Crab-eating macaque).